Consider the following 303-residue polypeptide: MSFTTKVKEELIHLSTGDNNELAAIIKLSGSLGLAHQSLHLSITTENAKIARYIYSFIEDAYVIVPEIRYHQKTNLRKNRVYTVYVEQGVETILADLKLADSFFGLETGIEPQVLSDDNAGRSYLKGAFLAAGSIRDPESGKYQLEIYSVYLDHAQDLAQLMQKFMLDAKTIEHKSGAVTYLQKAEDIMDFLIIIGAMSCKEDFEAIKLLREARNDINRANNAETANIAKTISASMKTINNIIKIMDTIGLESLPIELQQVAQLRVKHPDYSIQQVADALEFPITKSGVNHRLRKINKIADDL.

The H-T-H motif DNA-binding region spans 272–303; that stretch reads SIQQVADALEFPITKSGVNHRLRKINKIADDL.

It belongs to the WhiA family.

Involved in cell division and chromosome segregation. The polypeptide is Probable cell division protein WhiA (Streptococcus pyogenes serotype M3 (strain ATCC BAA-595 / MGAS315)).